Consider the following 111-residue polypeptide: Resistin-like gamma (111 aa).

An N-terminal signal peptide occupies residues 1–23; sequence MKTAICSLLICIFLLQLMVPVNT. 5 disulfide bridges follow: Cys-55/Cys-108, Cys-67/Cys-107, Cys-76/Cys-93, Cys-78/Cys-95, and Cys-82/Cys-97.

It belongs to the resistin/FIZZ family. In terms of assembly, homodimer. Heterodimer with RETNLB. Highly expressed in bone marrow, spleen and white blood cells. Also detected at low levels in thymus, lung, trachea, white adipose tissue, nasal respiratory epithelium, colon, small intestine, kidney, liver, and heart.

The protein localises to the secreted. Functionally, probable hormone. Promotes chemotaxis in myeloid cells. The protein is Resistin-like gamma of Rattus norvegicus (Rat).